The following is a 161-amino-acid chain: Thy-1 membrane glycoprotein (161 aa).

The first 19 residues, 1–19 (MNLAISIALLLTVLQVSRG), serve as a signal peptide directing secretion. Position 20 is a pyrrolidone carboxylic acid (Gln-20). In terms of domain architecture, Ig-like V-type spans 20 to 126 (QKVTSLTACL…SQNVTVLRDK (107 aa)). Disulfide bonds link Cys-28–Cys-130 and Cys-38–Cys-104. N-linked (GlcNAc...) asparagine glycans are attached at residues Asn-42 and Asn-79. Ser-82 carries the phosphoserine modification. Asn-119 carries N-linked (GlcNAc...) asparagine glycosylation. Residue Cys-130 is the site of GPI-anchor amidated cysteine; alternate attachment. Residues 131–161 (EGISLLAQNTSWLXLLLLSLSLLQATDFMSL) constitute a propeptide, removed in mature form. Residue Asn-139 is glycosylated (N-linked (GlcNAc...) asparagine).

Its subcellular location is the cell membrane. May play a role in cell-cell or cell-ligand interactions during synaptogenesis and other events in the brain. The chain is Thy-1 membrane glycoprotein (THY1) from Macaca mulatta (Rhesus macaque).